We begin with the raw amino-acid sequence, 330 residues long: ADP-L-glycero-D-manno-heptose-6-epimerase (330 aa).

NADP(+) is bound by residues 11-12 (FI), 32-33 (DD), Gln39, Gln54, 75-79 (QGACA), and Asn92. Tyr139 functions as the Proton acceptor in the catalytic mechanism. Position 143 (Lys143) interacts with NADP(+). Asn168 provides a ligand contact to substrate. NADP(+) contacts are provided by Val169 and Lys177. Lys177 serves as the catalytic Proton acceptor. Residues Arg179, His186, 200–203 (FGEH), Arg213, and Tyr292 contribute to the substrate site.

This sequence belongs to the NAD(P)-dependent epimerase/dehydratase family. HldD subfamily. Homopentamer. Requires NADP(+) as cofactor.

It carries out the reaction ADP-D-glycero-beta-D-manno-heptose = ADP-L-glycero-beta-D-manno-heptose. The protein operates within nucleotide-sugar biosynthesis; ADP-L-glycero-beta-D-manno-heptose biosynthesis; ADP-L-glycero-beta-D-manno-heptose from D-glycero-beta-D-manno-heptose 7-phosphate: step 4/4. It functions in the pathway bacterial outer membrane biogenesis; LPS core biosynthesis. Catalyzes the interconversion between ADP-D-glycero-beta-D-manno-heptose and ADP-L-glycero-beta-D-manno-heptose via an epimerization at carbon 6 of the heptose. The polypeptide is ADP-L-glycero-D-manno-heptose-6-epimerase (Pseudomonas aeruginosa (strain ATCC 15692 / DSM 22644 / CIP 104116 / JCM 14847 / LMG 12228 / 1C / PRS 101 / PAO1)).